The following is a 307-amino-acid chain: Putative gluconeogenesis factor (307 aa).

This sequence belongs to the gluconeogenesis factor family.

Its subcellular location is the cytoplasm. Functionally, required for morphogenesis under gluconeogenic growth conditions. This chain is Putative gluconeogenesis factor, found in Yersinia pestis.